A 320-amino-acid polypeptide reads, in one-letter code: Olfactory receptor 2C3 (320 aa).

Topologically, residues 1 to 26 (MMEIANVSSPEVFVLLGFSTRPSLET) are extracellular. The N-linked (GlcNAc...) asparagine glycan is linked to Asn6. Residues 27 to 50 (VLFIVVLSFYMVSILGNGIIILVS) form a helical membrane-spanning segment. The Cytoplasmic portion of the chain corresponds to 51–58 (HTDVHLHT). A helical membrane pass occupies residues 59–80 (PMYFFLANLPFLDMSFTTSIVP). The Extracellular portion of the chain corresponds to 81 to 101 (QLLANLWGPQKTISYGGCVVQ). Residues Cys98 and Cys190 are joined by a disulfide bond. The helical transmembrane segment at 102-121 (FYISHWLGATECVLLATMSY) threads the bilayer. At 122–140 (DRYAAICRPLHYTVIMHPQ) the chain is on the cytoplasmic side. Residues 141 to 159 (LCLGLALASWLGGLTTSMV) form a helical membrane-spanning segment. At 160–196 (GSTLTMLLPLCGNNCIDHFFCEMPLIMQLACVDTSLN) the chain is on the extracellular side. The helical transmembrane segment at 197 to 220 (EMEMYLASFVFVVLPLGLILVSYG) threads the bilayer. Residues 221–237 (HIARAVLKIRSAEGRRK) are Cytoplasmic-facing. A helical transmembrane segment spans residues 238-260 (AFNTCSSHVAVVSLFYGSIIFMY). Residues 261–273 (LQPAKSTSHEQGK) lie on the Extracellular side of the membrane. Residues 274 to 293 (FIALFYTVVTPALNPLIYTL) form a helical membrane-spanning segment. Residues 294-320 (RNTEVKSALRHMVLENCCGSAGKLAQI) lie on the Cytoplasmic side of the membrane.

This sequence belongs to the G-protein coupled receptor 1 family.

It localises to the cell membrane. Odorant receptor. The chain is Olfactory receptor 2C3 (OR2C3) from Homo sapiens (Human).